The chain runs to 887 residues: Alanine--tRNA ligase (887 aa).

Residues histidine 563, histidine 567, cysteine 677, and histidine 681 each coordinate Zn(2+).

It belongs to the class-II aminoacyl-tRNA synthetase family. The cofactor is Zn(2+).

It localises to the cytoplasm. The catalysed reaction is tRNA(Ala) + L-alanine + ATP = L-alanyl-tRNA(Ala) + AMP + diphosphate. Its function is as follows. Catalyzes the attachment of alanine to tRNA(Ala) in a two-step reaction: alanine is first activated by ATP to form Ala-AMP and then transferred to the acceptor end of tRNA(Ala). Also edits incorrectly charged Ser-tRNA(Ala) and Gly-tRNA(Ala) via its editing domain. The sequence is that of Alanine--tRNA ligase from Dinoroseobacter shibae (strain DSM 16493 / NCIMB 14021 / DFL 12).